A 247-amino-acid chain; its full sequence is uncharacterized protein (247 aa).

To M.pneumoniae MPN_635 N-terminal region.

This is an uncharacterized protein from Mycoplasma pneumoniae (strain ATCC 29342 / M129 / Subtype 1) (Mycoplasmoides pneumoniae).